The chain runs to 511 residues: Zinc finger CCCH-type with G patch domain-containing protein (511 aa).

A C3H1-type zinc finger spans residues P157–L180. The disordered stretch occupies residues D254–D281. Positions S271–D281 are enriched in acidic residues. One can recognise a G-patch domain in the interval T311–E357. Disordered stretches follow at residues G409–T433 and M478–F511. A compositionally biased stretch (basic and acidic residues) spans Q414–A425. Residues M478 to R493 are compositionally biased toward polar residues. Over residues S494–F511 the composition is skewed to basic and acidic residues.

The protein resides in the nucleus. Transcription repressor. The protein is Zinc finger CCCH-type with G patch domain-containing protein of Drosophila ananassae (Fruit fly).